A 572-amino-acid polypeptide reads, in one-letter code: DnaJ protein ERDJ3A (572 aa).

The N-terminal stretch at 1-23 is a signal peptide; that stretch reads MVRTRLAISVVLVSTLLLLNVKA. One can recognise a J domain in the interval 27–91; it reads DPYKVLGVSK…EKRKNYDLYG (65 aa). Positions 394 to 423 form a coiled coil; it reads ITVKNLKSAVQELGKLLEGLEKKNKKVSSK. Residues 419-439 form a disordered region; the sequence is KVSSKSQAGQAPNESSEKIPL. Polar residues predominate over residues 422-432; sequence SKSQAGQAPNE. An N-linked (GlcNAc...) asparagine glycan is attached at N431.

Interacts with BIP1 and BIP3. The interaction with BIP1 and BIP3 activates the ATPase enzyme activities of BIP1 and BIP3. In terms of processing, not N-glycosylated. In terms of tissue distribution, expressed in roots, leaves, stems, flowers, mature pollen grains and growing pollen tubes.

Its subcellular location is the endoplasmic reticulum lumen. In terms of biological role, regulates protein folding in the endoplasmic reticulum (ER) lumen. Functions probably as a co-molecular chaperone that is required for normal growth of pollen tubes under high-temperature stress. The polypeptide is DnaJ protein ERDJ3A (ERDJ3A) (Arabidopsis thaliana (Mouse-ear cress)).